Reading from the N-terminus, the 50-residue chain is Photosystem II reaction center protein M (50 aa).

The chain crosses the membrane as a helical span at residues 7–27 (GFIISLLFVGIPTIFLVGLYI). Residues 31 to 50 (DGEKSSFFSDSSKGKLGPKS) form a disordered region.

The protein belongs to the PsbM family. In terms of assembly, PSII is composed of 1 copy each of membrane proteins PsbA, PsbB, PsbC, PsbD, PsbE, PsbF, PsbH, PsbI, PsbJ, PsbK, PsbL, PsbM, PsbT, PsbX, PsbY, Psb30/Ycf12, peripheral proteins PsbO, CyanoQ (PsbQ), PsbU, PsbV and a large number of cofactors. It forms dimeric complexes.

It localises to the cellular thylakoid membrane. Functionally, one of the components of the core complex of photosystem II (PSII). PSII is a light-driven water:plastoquinone oxidoreductase that uses light energy to abstract electrons from H(2)O, generating O(2) and a proton gradient subsequently used for ATP formation. It consists of a core antenna complex that captures photons, and an electron transfer chain that converts photonic excitation into a charge separation. This subunit is found at the monomer-monomer interface. The sequence is that of Photosystem II reaction center protein M from Prochlorococcus marinus (strain SARG / CCMP1375 / SS120).